We begin with the raw amino-acid sequence, 460 residues long: tRNA modification GTPase MnmE (460 aa).

Arginine 22, glutamate 83, and lysine 122 together coordinate (6S)-5-formyl-5,6,7,8-tetrahydrofolate. The 163-residue stretch at 219–381 (GIKTLIIGRP…LQQTILKKFQ (163 aa)) folds into the TrmE-type G domain. Asparagine 229 serves as a coordination point for K(+). GTP is bound by residues 229–234 (NVGKSS), 248–254 (SDISGTT), and 273–276 (DTAG). Residue serine 233 participates in Mg(2+) binding. Residues serine 248, isoleucine 250, and threonine 253 each contribute to the K(+) site. Residue threonine 254 participates in Mg(2+) binding. Lysine 460 serves as a coordination point for (6S)-5-formyl-5,6,7,8-tetrahydrofolate.

It belongs to the TRAFAC class TrmE-Era-EngA-EngB-Septin-like GTPase superfamily. TrmE GTPase family. In terms of assembly, homodimer. Heterotetramer of two MnmE and two MnmG subunits. K(+) is required as a cofactor.

It is found in the cytoplasm. Exhibits a very high intrinsic GTPase hydrolysis rate. Involved in the addition of a carboxymethylaminomethyl (cmnm) group at the wobble position (U34) of certain tRNAs, forming tRNA-cmnm(5)s(2)U34. The polypeptide is tRNA modification GTPase MnmE (Aster yellows witches'-broom phytoplasma (strain AYWB)).